A 152-amino-acid chain; its full sequence is Nucleoside diphosphate kinase B (152 aa).

The segment at methionine 1–lysine 66 is interaction with AKAP13. Residues lysine 12, phenylalanine 60, arginine 88, threonine 94, arginine 105, and asparagine 115 each coordinate ATP. Catalysis depends on histidine 118, which acts as the Pros-phosphohistidine intermediate.

The protein belongs to the NDK family. Hexamer of two different chains: An and B (A6, A5B, A4B2, A3B3, A2B4, AB5, B6). Interacts with CAPN8. Interacts with AKAP13. Interacts with ITGB1BP1 (via C-terminal domain region). Interacts with BCL2L10. Mg(2+) serves as cofactor. Ubiquitous.

The protein resides in the cytoplasm. The protein localises to the cell projection. Its subcellular location is the lamellipodium. It is found in the ruffle. It localises to the nucleus. The catalysed reaction is a 2'-deoxyribonucleoside 5'-diphosphate + ATP = a 2'-deoxyribonucleoside 5'-triphosphate + ADP. It carries out the reaction a ribonucleoside 5'-diphosphate + ATP = a ribonucleoside 5'-triphosphate + ADP. The enzyme catalyses ATP + protein L-histidine = ADP + protein N-phospho-L-histidine.. Major role in the synthesis of nucleoside triphosphates other than ATP. The ATP gamma phosphate is transferred to the NDP beta phosphate via a ping-pong mechanism, using a phosphorylated active-site intermediate. Negatively regulates Rho activity by interacting with AKAP13/LBC. Acts as a transcriptional activator of the MYC gene; binds DNA non-specifically. Binds to both single-stranded guanine- and cytosine-rich strands within the nuclease hypersensitive element (NHE) III(1) region of the MYC gene promoter. Does not bind to duplex NHE III(1). Has G-quadruplex (G4) DNA-binding activity, which is independent of its nucleotide-binding and kinase activity. Binds both folded and unfolded G4 with similar low nanomolar affinities. Stabilizes folded G4s regardless of whether they are prefolded or not. Exhibits histidine protein kinase activity. The sequence is that of Nucleoside diphosphate kinase B (NME2) from Canis lupus familiaris (Dog).